Here is an 894-residue protein sequence, read N- to C-terminus: MAPQPVVTGLSPKEGPPGTRVIIRGEFLGTRVQDLIGLKICGSDCLLSAEWKSPNKIIARTGPAKGKGDIIVTTLSGGVGTSTVQFRAYHETIGPLKESAVWIEESPSQNFAWGRRTLAQSGLTQEDPLGLSIEGNEQKIPEDLRDLFPEACGDLSQEHFSPAWFLLENHLATSFEDLKAGLSYLKRKVESQKEGQLSFLKSNAGSVIDQLDTLMNIRDKLQEDVKLHGNETLNILETSIENSISESQKIFTDVLVRKEKADSTRSVLFALSRHKFLFCLPNSVDRRAKAGEYDIVVNDYSRAKNLFGKTEIPIFRKVLEEVDHRILSIRKQLHEKVVKMPQSVEQQKKLIKALISLELQQSGTPIGDKLRNIDPAWDAIEARAKYLEWTFRQTFDQHTSKDSGAQEKAKNRDSSQAPNRVNFCEELCDIAASQLPDLWRLGQLYFTGELRGPHDPKPGDFKRMVLNAIEKFCVYLRLAILIATDQRALRQSSGLAWPIGSASATHQFLPWIPQCLRFTRIAYATLISLDLPSEALDIIQKLIDEVRLFCFSIIFKRATDRCKKLGSQETWELGVEEYPGATLLPAALETLLIETLDEVQSVCMQRETREGNLLEPQSDGQREVTQRLQEFLSAFSAVIEELAFHSHDEETPTHNVSQLLGFPNAQQPDSVAGSGGAAAVTWEQRMLCCLANYAYCNKIFFPRLGDIFVRYGYPLPTLAIETARYTVNQLFTNLLEEYVEHKGDPLVGTIEPSMYLGRFQWDHEMEIGQLRPYAHECCDNLVGVYSEIYSISPALLRPILESIVQTISEELARLMSCVQRFSFTGAIQAHVDIRLLRDSLEGYVNETAKNYFMEALEAINPPLSGEQKRKADEILERVKRNMRLQLLCFSVKDP.

In terms of domain architecture, IPT/TIG spans 5-89 (PVVTGLSPKE…GTSTVQFRAY (85 aa)). Residues 398 to 413 (HTSKDSGAQEKAKNRD) show a composition bias toward basic and acidic residues. The tract at residues 398 to 417 (HTSKDSGAQEKAKNRDSSQA) is disordered.

The protein belongs to the SEC5 family. As to quaternary structure, the exocyst complex is composed of Sec3/Exoc1, Sec5/Exoc2, Sec6/Exoc3, Sec8/Exoc4, Sec10/Exoc5, Sec15/Exoc6, Exo70/Exoc7 and Exo84/Exoc8.

In terms of biological role, component of the exocyst complex involved in the docking of exocytic vesicles with fusion sites on the plasma membrane. The chain is Exocyst complex component 2 from Drosophila melanogaster (Fruit fly).